The chain runs to 462 residues: Solute carrier family 41 member 3 (462 aa).

The next 9 membrane-spanning stretches (helical) occupy residues 41–61 (CQVA…GLVM), 121–141 (LAVV…ASLM), 163–183 (VITA…IVIG), 194–214 (IATP…LALM), 225–245 (WYLT…WIFI), 258–278 (YGWF…LILS), 351–371 (VLLF…CLVE), 380–400 (IFVL…LYLA), and 424–444 (GLGD…DWLL).

The protein belongs to the SLC41A transporter family.

The protein localises to the mitochondrion inner membrane. It carries out the reaction Mg(2+)(in) + 2 Na(+)(out) = Mg(2+)(out) + 2 Na(+)(in). Its function is as follows. Na(+)/Mg(2+) ion exchanger that acts as a predominant Mg(2+) efflux system at the mitochondrial inner membrane. In Rattus norvegicus (Rat), this protein is Solute carrier family 41 member 3 (Slc41a3).